The following is a 536-amino-acid chain: Phosphoenolpyruvate carboxykinase (ATP) (536 aa).

Arg-61, Tyr-195, and Lys-201 together coordinate substrate. Residues Lys-201, His-220, and Gly-236–Thr-244 contribute to the ATP site. Positions 201 and 220 each coordinate Mn(2+). Asp-257 serves as a coordination point for Mn(2+). Glu-285, Arg-322, and Thr-447 together coordinate ATP. Arg-322 serves as a coordination point for substrate.

The protein belongs to the phosphoenolpyruvate carboxykinase (ATP) family. The cofactor is Mn(2+).

The protein resides in the cytoplasm. The enzyme catalyses oxaloacetate + ATP = phosphoenolpyruvate + ADP + CO2. It functions in the pathway carbohydrate biosynthesis; gluconeogenesis. In terms of biological role, involved in the gluconeogenesis. Catalyzes the conversion of oxaloacetate (OAA) to phosphoenolpyruvate (PEP) through direct phosphoryl transfer between the nucleoside triphosphate and OAA. In Sinorhizobium fredii (strain NBRC 101917 / NGR234), this protein is Phosphoenolpyruvate carboxykinase (ATP).